The chain runs to 356 residues: uncharacterized protein (356 aa).

The next 6 membrane-spanning stretches (helical) occupy residues 2–22 (FEAI…FHRL), 35–55 (EYVT…PIPF), 76–96 (NMIY…FIFG), 99–119 (IIYG…GPFL), 124–144 (IISL…LALL), and 151–171 (VEIL…AITF). The 136-residue stretch at 218-353 (QSLALLLIDI…GRNKVMFNPI (136 aa)) folds into the GGDEF domain.

The protein localises to the cell membrane. This is an uncharacterized protein from Staphylococcus epidermidis (strain ATCC 35984 / DSM 28319 / BCRC 17069 / CCUG 31568 / BM 3577 / RP62A).